Reading from the N-terminus, the 215-residue chain is 3-demethoxyubiquinol 3-hydroxylase (215 aa).

Positions 64, 94, 97, 146, 178, and 181 each coordinate Fe cation.

This sequence belongs to the COQ7 family. It depends on Fe cation as a cofactor.

The protein localises to the cell membrane. It catalyses the reaction a 5-methoxy-2-methyl-3-(all-trans-polyprenyl)benzene-1,4-diol + AH2 + O2 = a 3-demethylubiquinol + A + H2O. It functions in the pathway cofactor biosynthesis; ubiquinone biosynthesis. Functionally, catalyzes the hydroxylation of 2-nonaprenyl-3-methyl-6-methoxy-1,4-benzoquinol during ubiquinone biosynthesis. This chain is 3-demethoxyubiquinol 3-hydroxylase, found in Bordetella avium (strain 197N).